A 297-amino-acid polypeptide reads, in one-letter code: Probable esterase afoC (297 aa).

Ser136 serves as the catalytic Charge relay system. The span at 204–217 shows a compositional bias: low complexity; that stretch reads ASSSASASVSGSES. The segment at 204-226 is disordered; the sequence is ASSSASASVSGSESAGEEEEDGH. Active-site charge relay system residues include Asp240 and His267.

This sequence belongs to the LovG family.

Functionally, probable esterase; part of the gene cluster that mediates the biosynthesis of asperfuranone, a probable antitumor agent. The polyketide synthase afoG is responsible for producing the 3,5-dimethyloctadienone moiety from acetyl-CoA, three malonyl-CoA, and two S-adenosyl methionines (SAM). The 3,5-dimethyloctadienone moiety is then loaded onto the SAT domain of afoE and extended with four malonyl-CoA and one SAM, which leads to the formation of 2,4-dihydroxy-6-(5,7-dimethyl-2-oxo-trans-3-trans-5-nonadienyl)-3-methylbenzaldehyde (compound 2) after reductive release and aldol condensation. AfoD is the next enzyme in the biosynthesis sequence and hydroxylates the side chain at the benzylic position of compound 2. After benzylic hydroxylation, a furan ring is formed after five-member ring hemiacetal formation and water elimination. AfoF and afoC are proposed to oxidize the R-diketone proton and to reduce the unconjugated carbonyl group, respectively, to generate asperfuranone. Since no intermediates could be isolated from afoF and afoC deletants, the sequence of these two enzymes is not fully understood. Moreover, since afoC deletant still produces a small amount of asperfuranone, other endogenous oxidoreductases might catalyze the same reaction with much less efficiency. The sequence is that of Probable esterase afoC from Emericella nidulans (strain FGSC A4 / ATCC 38163 / CBS 112.46 / NRRL 194 / M139) (Aspergillus nidulans).